Consider the following 142-residue polypeptide: Lysozyme X (142 aa).

The signal sequence occupies residues 1–19; that stretch reads MRALLGICVLALVTPAVLG. The 123-residue stretch at 20–142 folds into the C-type lysozyme domain; sequence RTMDRCSLAR…YLPPIDDCFV (123 aa). Cystine bridges form between C25–C140, C46–C130, C81–C97, and C93–C111. Active-site residues include E51 and D69.

The protein belongs to the glycosyl hydrolase 22 family. As to expression, found in the midgut.

It catalyses the reaction Hydrolysis of (1-&gt;4)-beta-linkages between N-acetylmuramic acid and N-acetyl-D-glucosamine residues in a peptidoglycan and between N-acetyl-D-glucosamine residues in chitodextrins.. Its function is as follows. Unlikely to play an active role in the humoral immune defense. May have a function in the digestion of bacteria in the food. May be involved in the clearance of bacteria from the larval gut before metamorphosis. In Drosophila melanogaster (Fruit fly), this protein is Lysozyme X (LysX).